Here is a 256-residue protein sequence, read N- to C-terminus: Neuroendocrine secretory protein 55 (256 aa).

The first 46 residues, 1–46 (MDRRSRAHQWRRARHNYNDLCPPIGRRAATALLWLSCSIALLRALA), serve as a signal peptide directing secretion. Positions 61–256 (SFLNAHHRSA…RKGPIPIRRH (196 aa)) are disordered. The segment covering 86–103 (ESDHEHEEAEPELARPEC) has biased composition (basic and acidic residues). Composition is skewed to acidic residues over residues 104 to 139 (LEYDQDDYETETDSETEPESDIQSETEFETEPETEP) and 206 to 216 (LDEDPRDPEES). Over residues 225–236 (QPRRCKTRRPAR) the composition is skewed to basic residues.

The protein belongs to the NESP55 family. In terms of processing, binds keratan sulfate chains. Post-translationally, may be proteolytically processed to give rise to a number of active peptides.

Its subcellular location is the cytoplasmic vesicle. It localises to the secretory vesicle. It is found in the synaptic vesicle. The protein localises to the secreted. In Rattus norvegicus (Rat), this protein is Neuroendocrine secretory protein 55.